Reading from the N-terminus, the 291-residue chain is ATP phosphoribosyltransferase (291 aa).

The protein belongs to the ATP phosphoribosyltransferase family. Long subfamily. Requires Mg(2+) as cofactor.

Its subcellular location is the cytoplasm. The catalysed reaction is 1-(5-phospho-beta-D-ribosyl)-ATP + diphosphate = 5-phospho-alpha-D-ribose 1-diphosphate + ATP. Its pathway is amino-acid biosynthesis; L-histidine biosynthesis; L-histidine from 5-phospho-alpha-D-ribose 1-diphosphate: step 1/9. Its activity is regulated as follows. Feedback inhibited by histidine. Catalyzes the condensation of ATP and 5-phosphoribose 1-diphosphate to form N'-(5'-phosphoribosyl)-ATP (PR-ATP). Has a crucial role in the pathway because the rate of histidine biosynthesis seems to be controlled primarily by regulation of HisG enzymatic activity. In Geotalea uraniireducens (strain Rf4) (Geobacter uraniireducens), this protein is ATP phosphoribosyltransferase.